A 580-amino-acid chain; its full sequence is DNA ligase B (580 aa).

The active-site N6-AMP-lysine intermediate is the K135.

This sequence belongs to the NAD-dependent DNA ligase family. LigB subfamily.

It catalyses the reaction NAD(+) + (deoxyribonucleotide)n-3'-hydroxyl + 5'-phospho-(deoxyribonucleotide)m = (deoxyribonucleotide)n+m + AMP + beta-nicotinamide D-nucleotide.. Catalyzes the formation of phosphodiester linkages between 5'-phosphoryl and 3'-hydroxyl groups in double-stranded DNA using NAD as a coenzyme and as the energy source for the reaction. The protein is DNA ligase B of Photorhabdus laumondii subsp. laumondii (strain DSM 15139 / CIP 105565 / TT01) (Photorhabdus luminescens subsp. laumondii).